The sequence spans 178 residues: Transcription factor E (178 aa).

Residues 4–88 (AEDLFINLAK…YWKPNIDQIN (85 aa)) enclose the HTH TFE/IIEalpha-type domain.

This sequence belongs to the TFE family. Monomer. Interaction with RNA polymerase subunits RpoF and RpoE is necessary for Tfe stimulatory transcription activity. Able to interact with Tbp and RNA polymerase in the absence of DNA promoter. Interacts both with the preinitiation and elongation complexes.

In terms of biological role, transcription factor that plays a role in the activation of archaeal genes transcribed by RNA polymerase. Facilitates transcription initiation by enhancing TATA-box recognition by TATA-box-binding protein (Tbp), and transcription factor B (Tfb) and RNA polymerase recruitment. Not absolutely required for transcription in vitro, but particularly important in cases where Tbp or Tfb function is not optimal. It dynamically alters the nucleic acid-binding properties of RNA polymerases by stabilizing the initiation complex and destabilizing elongation complexes. Seems to translocate with the RNA polymerase following initiation and acts by binding to the non template strand of the transcription bubble in elongation complexes. In Saccharolobus islandicus (strain L.S.2.15 / Lassen #1) (Sulfolobus islandicus), this protein is Transcription factor E.